A 143-amino-acid chain; its full sequence is Large ribosomal subunit protein uL11 (143 aa).

Belongs to the universal ribosomal protein uL11 family. In terms of assembly, part of the ribosomal stalk of the 50S ribosomal subunit. Interacts with L10 and the large rRNA to form the base of the stalk. L10 forms an elongated spine to which L12 dimers bind in a sequential fashion forming a multimeric L10(L12)X complex. In terms of processing, one or more lysine residues are methylated.

Functionally, forms part of the ribosomal stalk which helps the ribosome interact with GTP-bound translation factors. The sequence is that of Large ribosomal subunit protein uL11 from Bifidobacterium longum subsp. infantis (strain ATCC 15697 / DSM 20088 / JCM 1222 / NCTC 11817 / S12).